Here is a 165-residue protein sequence, read N- to C-terminus: MNNKYNYKNLKWLWLSILIMLLDIGTKYWVKTHFWIGEVLSVLPGINCYYVCNPGLAFGLFTNASLYYRWLFVWIITLVIVAFIIALYKLIERPKCYSISYSMVIGGALGNLLDRILYGAVVDFIDVHIKNWHWPTFNVADIAICIGITIVTIRFYYDFIKNNLY.

Helical transmembrane passes span leucine 10 to valine 30, valine 42 to threonine 62, leucine 71 to isoleucine 91, isoleucine 105 to isoleucine 125, and histidine 133 to isoleucine 153. Residues aspartate 123 and aspartate 141 contribute to the active site.

It belongs to the peptidase A8 family.

It is found in the cell inner membrane. It catalyses the reaction Release of signal peptides from bacterial membrane prolipoproteins. Hydrolyzes -Xaa-Yaa-Zaa-|-(S,diacylglyceryl)Cys-, in which Xaa is hydrophobic (preferably Leu), and Yaa (Ala or Ser) and Zaa (Gly or Ala) have small, neutral side chains.. The protein operates within protein modification; lipoprotein biosynthesis (signal peptide cleavage). Its function is as follows. This protein specifically catalyzes the removal of signal peptides from prolipoproteins. In Blochmanniella pennsylvanica (strain BPEN), this protein is Lipoprotein signal peptidase.